The chain runs to 203 residues: Holliday junction branch migration complex subunit RuvA (203 aa).

The domain I stretch occupies residues 1 to 63 (MIGQLSGKVD…EEHIHLYGFL (63 aa)). The interval 64-142 (TLEEKIFFNL…KISSGSAIIK (79 aa)) is domain II. A flexible linker region spans residues 143-149 (ESLNIKN). The segment at 150–203 (ITPVASNEVIKALVNLGFSRFEAQNAVQGIITQNPEISIDELIKTALKNRNSNF) is domain III.

It belongs to the RuvA family. Homotetramer. Forms an RuvA(8)-RuvB(12)-Holliday junction (HJ) complex. HJ DNA is sandwiched between 2 RuvA tetramers; dsDNA enters through RuvA and exits via RuvB. An RuvB hexamer assembles on each DNA strand where it exits the tetramer. Each RuvB hexamer is contacted by two RuvA subunits (via domain III) on 2 adjacent RuvB subunits; this complex drives branch migration. In the full resolvosome a probable DNA-RuvA(4)-RuvB(12)-RuvC(2) complex forms which resolves the HJ.

The protein localises to the cytoplasm. Functionally, the RuvA-RuvB-RuvC complex processes Holliday junction (HJ) DNA during genetic recombination and DNA repair, while the RuvA-RuvB complex plays an important role in the rescue of blocked DNA replication forks via replication fork reversal (RFR). RuvA specifically binds to HJ cruciform DNA, conferring on it an open structure. The RuvB hexamer acts as an ATP-dependent pump, pulling dsDNA into and through the RuvAB complex. HJ branch migration allows RuvC to scan DNA until it finds its consensus sequence, where it cleaves and resolves the cruciform DNA. The chain is Holliday junction branch migration complex subunit RuvA from Rickettsia conorii (strain ATCC VR-613 / Malish 7).